Consider the following 184-residue polypeptide: Elongation factor P (184 aa).

Belongs to the elongation factor P family.

The protein resides in the cytoplasm. The protein operates within protein biosynthesis; polypeptide chain elongation. In terms of biological role, involved in peptide bond synthesis. Stimulates efficient translation and peptide-bond synthesis on native or reconstituted 70S ribosomes in vitro. Probably functions indirectly by altering the affinity of the ribosome for aminoacyl-tRNA, thus increasing their reactivity as acceptors for peptidyl transferase. The protein is Elongation factor P of Mycoplasma mycoides subsp. mycoides SC (strain CCUG 32753 / NCTC 10114 / PG1).